The following is a 483-amino-acid chain: Glutamate--tRNA ligase (483 aa).

The 'HIGH' region motif lies at 11–21; the sequence is PSPTGLLHIGN. The 'KMSKS' region motif lies at 255-259; it reads KLSKR. ATP is bound at residue lysine 258.

The protein belongs to the class-I aminoacyl-tRNA synthetase family. Glutamate--tRNA ligase type 1 subfamily. As to quaternary structure, monomer.

Its subcellular location is the cytoplasm. The enzyme catalyses tRNA(Glu) + L-glutamate + ATP = L-glutamyl-tRNA(Glu) + AMP + diphosphate. Catalyzes the attachment of glutamate to tRNA(Glu) in a two-step reaction: glutamate is first activated by ATP to form Glu-AMP and then transferred to the acceptor end of tRNA(Glu). This Lactococcus lactis subsp. lactis (strain IL1403) (Streptococcus lactis) protein is Glutamate--tRNA ligase.